The primary structure comprises 535 residues: Putative subtilisin-like proteinase 2 (535 aa).

The N-terminal stretch at 1-17 (MFFVGVAVLAALQSVWG) is a signal peptide. The 255-residue stretch at 221–475 (NWIFRVLQIK…IPRLGCKGRI (255 aa)) folds into the Peptidase S8 domain. Residues D255 and H277 each act as charge relay system in the active site. An intrachain disulfide couples C369 to C400. The active-site Charge relay system is the S420. A helical membrane pass occupies residues 489–509 (IVPLVFVVLITSALLYLLLIG).

This sequence belongs to the peptidase S8 family.

It localises to the membrane. May be involved in the degradation of proteins for nutrient acquisition or possess a regulatory function by proteolytic activation of proproteins. The protein is Putative subtilisin-like proteinase 2 (SPL2) of Encephalitozoon cuniculi (strain GB-M1) (Microsporidian parasite).